Reading from the N-terminus, the 441-residue chain is MSHEEDLIDYSDEELQTTDAAATTAAPAANGDAAKKGDLTVSGGRPDKKGSYVGIHSTGFRDFLLKGELLRAITDCGFEHPSEVQQVCIPTAILNVDVLCQAKSGLGKTAVFVLTTLHQLEPVPGECSVLVMCHTRELAYQIKNEYARFSKYLPDVKTAVFYGGTPIQKDVEVLSNKESYPNIVVGTPGRLNALVRDKKLSLRNVKAFVLDECDKMLDQIDMRRDVQEIFRATPADKQVMMFSATLSQEIRPVCKKFMRNPLEVYVDDDTKLTLHGLQQYYIKLSEAEKNRKLNELLDSLEFNQVIIFVKSTLRANELDKLLRECNFPSIAVHSGVSQEERIKRYKEFKEFNKRICVATDVFGRGIDIERINLAINYDLPADADSYLHRVGRAGRFGTKGLSISFVSNEEDEKVLKDIEKRFEVALPEYPEGGVDSSTYMA.

Residues 23–32 (TTAAPAANGD) are compositionally biased toward low complexity. The segment at 23–42 (TTAAPAANGDAAKKGDLTVS) is disordered. A Q motif motif is present at residues 58 to 86 (TGFRDFLLKGELLRAITDCGFEHPSEVQQ). Residues 89-264 (IPTAILNVDV…KKFMRNPLEV (176 aa)) enclose the Helicase ATP-binding domain. 102 to 109 (AKSGLGKT) is an ATP binding site. Residues 211-214 (DECD) carry the DECD box motif. One can recognise a Helicase C-terminal domain in the interval 292–437 (KLNELLDSLE…EYPEGGVDSS (146 aa)).

The protein belongs to the DEAD box helicase family. DECD subfamily.

The protein localises to the nucleus. It carries out the reaction ATP + H2O = ADP + phosphate + H(+). In terms of biological role, ATP-binding RNA helicase involved in transcription elongation and required for the export of mRNA out of the nucleus. SUB2 also plays a role in pre-mRNA splicing and spliceosome assembly. May be involved in rDNA and telomeric silencing, and maintenance of genome integrity. This chain is ATP-dependent RNA helicase sub2 (sub2), found in Aspergillus oryzae (strain ATCC 42149 / RIB 40) (Yellow koji mold).